The following is a 153-amino-acid chain: MAKLKYKVEADPKNTARAMGRTLRISRKHAIELCRELSGMKLDAAVAYLNRVIALETPVPFKVHNKDLPHRKGKIGTHSGRFPQKASLEILQVLDNAKKNAEQKGLNTEKLRIKHISSNRGFTIKRYMPRAFGRASPKNQETIHIQVILEEFY.

It belongs to the universal ribosomal protein uL22 family. In terms of assembly, part of the 50S ribosomal subunit.

Functionally, this protein binds specifically to 23S rRNA. It makes multiple contacts with different domains of the 23S rRNA in the assembled 50S subunit and ribosome. The globular domain of the protein is located near the polypeptide exit tunnel on the outside of the subunit, while an extended beta-hairpin is found that lines the wall of the exit tunnel in the center of the 70S ribosome. The protein is Large ribosomal subunit protein uL22 of Methanococcus maripaludis (strain C5 / ATCC BAA-1333).